The sequence spans 342 residues: Heat-inducible transcription repressor HrcA (342 aa).

This sequence belongs to the HrcA family.

Negative regulator of class I heat shock genes (grpE-dnaK-dnaJ and groELS operons). Prevents heat-shock induction of these operons. The polypeptide is Heat-inducible transcription repressor HrcA (Mesoplasma florum (strain ATCC 33453 / NBRC 100688 / NCTC 11704 / L1) (Acholeplasma florum)).